The chain runs to 300 residues: Lysenin-related protein 3 (300 aa).

Residues 12-35 (EEIEVDVVAVWKEGYVYENRGDTS) form an N-terminal cap domain region. Positions 36 to 109 (VEQKITMTKG…SQVIEHTVTI (74 aa)) are beta-hairpin domain. The N-terminal cap domain stretch occupies residues 110-158 (PPTSKFTRWKLNADVGGTDIEYMYLIDEVTPISVTQTIPQVIRSRAKIL). The C-terminal receptor-binding domain stretch occupies residues 159–299 (VGRQIHLGTT…EDKWILEVVN (141 aa)). Positions 187, 229, 235, and 284 each coordinate an N-(acyl)-sphingosylphosphocholine. Cys-274 and Cys-285 form a disulfide bridge.

This sequence belongs to the lysenin family. In terms of assembly, binds to sphingomyelin as a monomer by using its C-terminal domain. Forms a nonamer when sphingomyelin/LRP-3 ratio is lower than ca 500. Oligomerization, but not binding, is influenced by the fluidity of sphingomyelin. In terms of tissue distribution, expressed by coelomocytes.

It is found in the secreted. It localises to the target cell membrane. In terms of biological role, pore-forming toxin that specifically binds sphingomyelin in the plasma membrane of various cells. Has antibacterial and hemolytic activity. In Eisenia fetida (Red wiggler worm), this protein is Lysenin-related protein 3.